Consider the following 336-residue polypeptide: Holliday junction branch migration complex subunit RuvB (336 aa).

A large ATPase domain (RuvB-L) region spans residues 4–184 (ADRLISASGG…FGIVQRLEFY (181 aa)). ATP-binding positions include I23, R24, G65, K68, T69, T70, 131-133 (EDY), R174, Y184, and R221. T69 contributes to the Mg(2+) binding site. The interval 185–255 (NVKDLTDIVA…IAARAMDMLD (71 aa)) is small ATPAse domain (RuvB-S). The head domain (RuvB-H) stretch occupies residues 258 to 336 (NEGFDFMDRK…HFGLQRPDEG (79 aa)). R313 and R318 together coordinate DNA.

Belongs to the RuvB family. Homohexamer. Forms an RuvA(8)-RuvB(12)-Holliday junction (HJ) complex. HJ DNA is sandwiched between 2 RuvA tetramers; dsDNA enters through RuvA and exits via RuvB. An RuvB hexamer assembles on each DNA strand where it exits the tetramer. Each RuvB hexamer is contacted by two RuvA subunits (via domain III) on 2 adjacent RuvB subunits; this complex drives branch migration. In the full resolvosome a probable DNA-RuvA(4)-RuvB(12)-RuvC(2) complex forms which resolves the HJ.

The protein localises to the cytoplasm. The enzyme catalyses ATP + H2O = ADP + phosphate + H(+). Functionally, the RuvA-RuvB-RuvC complex processes Holliday junction (HJ) DNA during genetic recombination and DNA repair, while the RuvA-RuvB complex plays an important role in the rescue of blocked DNA replication forks via replication fork reversal (RFR). RuvA specifically binds to HJ cruciform DNA, conferring on it an open structure. The RuvB hexamer acts as an ATP-dependent pump, pulling dsDNA into and through the RuvAB complex. RuvB forms 2 homohexamers on either side of HJ DNA bound by 1 or 2 RuvA tetramers; 4 subunits per hexamer contact DNA at a time. Coordinated motions by a converter formed by DNA-disengaged RuvB subunits stimulates ATP hydrolysis and nucleotide exchange. Immobilization of the converter enables RuvB to convert the ATP-contained energy into a lever motion, pulling 2 nucleotides of DNA out of the RuvA tetramer per ATP hydrolyzed, thus driving DNA branch migration. The RuvB motors rotate together with the DNA substrate, which together with the progressing nucleotide cycle form the mechanistic basis for DNA recombination by continuous HJ branch migration. Branch migration allows RuvC to scan DNA until it finds its consensus sequence, where it cleaves and resolves cruciform DNA. The polypeptide is Holliday junction branch migration complex subunit RuvB (Aeromonas hydrophila subsp. hydrophila (strain ATCC 7966 / DSM 30187 / BCRC 13018 / CCUG 14551 / JCM 1027 / KCTC 2358 / NCIMB 9240 / NCTC 8049)).